Reading from the N-terminus, the 223-residue chain is Phosphoribosylformylglycinamidine synthase subunit PurQ (223 aa).

The 220-residue stretch at 4 to 223 (FAVVVFPGTN…FKGMVEWVRS (220 aa)) folds into the Glutamine amidotransferase type-1 domain. Cysteine 85 functions as the Nucleophile in the catalytic mechanism. Active-site residues include histidine 196 and glutamate 198.

As to quaternary structure, part of the FGAM synthase complex composed of 1 PurL, 1 PurQ and 2 PurS subunits.

It is found in the cytoplasm. It carries out the reaction N(2)-formyl-N(1)-(5-phospho-beta-D-ribosyl)glycinamide + L-glutamine + ATP + H2O = 2-formamido-N(1)-(5-O-phospho-beta-D-ribosyl)acetamidine + L-glutamate + ADP + phosphate + H(+). The enzyme catalyses L-glutamine + H2O = L-glutamate + NH4(+). It functions in the pathway purine metabolism; IMP biosynthesis via de novo pathway; 5-amino-1-(5-phospho-D-ribosyl)imidazole from N(2)-formyl-N(1)-(5-phospho-D-ribosyl)glycinamide: step 1/2. Part of the phosphoribosylformylglycinamidine synthase complex involved in the purines biosynthetic pathway. Catalyzes the ATP-dependent conversion of formylglycinamide ribonucleotide (FGAR) and glutamine to yield formylglycinamidine ribonucleotide (FGAM) and glutamate. The FGAM synthase complex is composed of three subunits. PurQ produces an ammonia molecule by converting glutamine to glutamate. PurL transfers the ammonia molecule to FGAR to form FGAM in an ATP-dependent manner. PurS interacts with PurQ and PurL and is thought to assist in the transfer of the ammonia molecule from PurQ to PurL. The chain is Phosphoribosylformylglycinamidine synthase subunit PurQ from Pyrococcus furiosus (strain ATCC 43587 / DSM 3638 / JCM 8422 / Vc1).